Consider the following 259-residue polypeptide: Phosphate import ATP-binding protein PstB (259 aa).

Residues 5–248 form the ABC transporter domain; sequence IDVSGLHVYY…NKIFTKPEKK (244 aa). 37–44 is a binding site for ATP; sequence GSSGCGKS.

The protein belongs to the ABC transporter superfamily. Phosphate importer (TC 3.A.1.7) family. In terms of assembly, the complex is composed of two ATP-binding proteins (PstB), two transmembrane proteins (PstC and PstA) and a solute-binding protein (PstS).

The protein localises to the cell membrane. The catalysed reaction is phosphate(out) + ATP + H2O = ADP + 2 phosphate(in) + H(+). Part of the ABC transporter complex PstSACB involved in phosphate import. Responsible for energy coupling to the transport system. This is Phosphate import ATP-binding protein PstB from Thermobifida fusca (strain YX).